We begin with the raw amino-acid sequence, 181 residues long: Protein Syd (181 aa).

The protein belongs to the Syd family.

The protein localises to the cell inner membrane. Functionally, interacts with the SecY protein in vivo. May bind preferentially to an uncomplexed state of SecY, thus functioning either as a chelating agent for excess SecY in the cell or as a regulatory factor that negatively controls the translocase function. The protein is Protein Syd of Escherichia coli O157:H7.